Here is a 100-residue protein sequence, read N- to C-terminus: Urease subunit gamma (100 aa).

It belongs to the urease gamma subunit family. Heterotrimer of UreA (gamma), UreB (beta) and UreC (alpha) subunits. Three heterotrimers associate to form the active enzyme.

It localises to the cytoplasm. The catalysed reaction is urea + 2 H2O + H(+) = hydrogencarbonate + 2 NH4(+). Its pathway is nitrogen metabolism; urea degradation; CO(2) and NH(3) from urea (urease route): step 1/1. The sequence is that of Urease subunit gamma from Burkholderia multivorans (strain ATCC 17616 / 249).